Here is a 485-residue protein sequence, read N- to C-terminus: Ribulose bisphosphate carboxylase large chain (485 aa).

The propeptide occupies 1–2; sequence MS. Pro-3 is subject to N-acetylproline. Lys-14 carries the N6,N6,N6-trimethyllysine modification. Substrate-binding residues include Asn-123 and Thr-173. Lys-175 functions as the Proton acceptor in the catalytic mechanism. Lys-177 is a binding site for substrate. Residues Lys-201, Asp-203, and Glu-204 each coordinate Mg(2+). Lys-201 carries the post-translational modification N6-carboxylysine. The active-site Proton acceptor is the His-294. The substrate site is built by Arg-295, His-327, and Ser-379.

It belongs to the RuBisCO large chain family. Type I subfamily. Heterohexadecamer of 8 large chains and 8 small chains; disulfide-linked. The disulfide link is formed within the large subunit homodimers. Requires Mg(2+) as cofactor. The disulfide bond which can form in the large chain dimeric partners within the hexadecamer appears to be associated with oxidative stress and protein turnover.

Its subcellular location is the plastid. The protein resides in the chloroplast. The enzyme catalyses 2 (2R)-3-phosphoglycerate + 2 H(+) = D-ribulose 1,5-bisphosphate + CO2 + H2O. The catalysed reaction is D-ribulose 1,5-bisphosphate + O2 = 2-phosphoglycolate + (2R)-3-phosphoglycerate + 2 H(+). In terms of biological role, ruBisCO catalyzes two reactions: the carboxylation of D-ribulose 1,5-bisphosphate, the primary event in carbon dioxide fixation, as well as the oxidative fragmentation of the pentose substrate in the photorespiration process. Both reactions occur simultaneously and in competition at the same active site. The protein is Ribulose bisphosphate carboxylase large chain of Bartlettina sordida (Purple torch).